The chain runs to 443 residues: Eukaryotic translation initiation factor 3 subunit M (443 aa).

In terms of domain architecture, PCI spans 205-375 (GLYQSTGNLA…SLIRIHSISS (171 aa)). The tract at residues 413 to 443 (ETVAQQGLGQQRRGGKRREEKKEKEDKEEQE) is disordered. Basic and acidic residues predominate over residues 429–443 (RREEKKEKEDKEEQE).

This sequence belongs to the eIF-3 subunit M family. In terms of assembly, component of the eukaryotic translation initiation factor 3 (eIF-3) complex.

The protein localises to the cytoplasm. Its function is as follows. Component of the eukaryotic translation initiation factor 3 (eIF-3) complex, which is involved in protein synthesis of a specialized repertoire of mRNAs and, together with other initiation factors, stimulates binding of mRNA and methionyl-tRNAi to the 40S ribosome. The eIF-3 complex specifically targets and initiates translation of a subset of mRNAs involved in cell proliferation. This Cryptococcus neoformans var. neoformans serotype D (strain B-3501A) (Filobasidiella neoformans) protein is Eukaryotic translation initiation factor 3 subunit M.